Reading from the N-terminus, the 297-residue chain is Alarmin release inhibitor (297 aa).

Residues asparagine 107, asparagine 175, and asparagine 190 are each glycosylated (N-linked (GlcNAc...) asparagine). The region spanning 151–211 (TYDPTPNTPT…WVPTLGVCPK (61 aa)) is the Sushi domain. Residues cysteine 183 and cysteine 209 are joined by a disulfide bond.

As to quaternary structure, interacts with mouse IL33 (in reduced form).

It localises to the secreted. It is found in the host nucleus. Its function is as follows. Secreted protein which suppresses the host allergic response by inhibiting the interaction of host IL33 with its receptor in order to maintain parasitic infection. Binds to both host IL33 and host nuclear DNA and this dual binding blocks the interaction of IL33 with its receptor, and tethers IL33 within necrotic cells, preventing its release, and blocking allergic response initiation. The sequence is that of Alarmin release inhibitor from Heligmosomoides polygyrus (Parasitic roundworm).